Reading from the N-terminus, the 174-residue chain is Cytochrome c-type biogenesis protein CcmE (174 aa).

Residues methionine 1–arginine 8 are Cytoplasmic-facing. A helical; Signal-anchor for type II membrane protein transmembrane segment spans residues leucine 9 to alanine 29. At leucine 30–glutamine 174 the chain is on the periplasmic side. Positions 131 and 135 each coordinate heme. Positions lysine 149–glutamine 174 are disordered. A compositionally biased stretch (basic and acidic residues) spans leucine 156 to glutamine 174.

This sequence belongs to the CcmE/CycJ family.

The protein resides in the cell inner membrane. Heme chaperone required for the biogenesis of c-type cytochromes. Transiently binds heme delivered by CcmC and transfers the heme to apo-cytochromes in a process facilitated by CcmF and CcmH. This Histophilus somni (strain 129Pt) (Haemophilus somnus) protein is Cytochrome c-type biogenesis protein CcmE.